The chain runs to 151 residues: Peptide methionine sulfoxide reductase MsrB (151 aa).

One can recognise a MsrB domain in the interval 9–132 (DGELKRTLTK…NSAALKFIPF (124 aa)). Residue Cys-121 is the Nucleophile of the active site.

It belongs to the MsrB Met sulfoxide reductase family.

It catalyses the reaction L-methionyl-[protein] + [thioredoxin]-disulfide + H2O = L-methionyl-(R)-S-oxide-[protein] + [thioredoxin]-dithiol. In Mycoplasma pneumoniae (strain ATCC 29342 / M129 / Subtype 1) (Mycoplasmoides pneumoniae), this protein is Peptide methionine sulfoxide reductase MsrB.